We begin with the raw amino-acid sequence, 538 residues long: Xylosidase/arabinosidase 43B (538 aa).

The active-site Proton donor is glutamate 367.

Belongs to the glycosyl hydrolase 43 family.

It carries out the reaction Hydrolysis of (1-&gt;4)-beta-D-xylans, to remove successive D-xylose residues from the non-reducing termini.. The enzyme catalyses Hydrolysis of terminal non-reducing alpha-L-arabinofuranoside residues in alpha-L-arabinosides.. Activity is inhibited by Ag(+), Li(+), Cu(2+), Cr(3+), Co(3+), Ni(2+), Mg(2+), Zn(2+), EDTA, SDS and beta-mercaptoethanol; but not by Mn(2+), Pb(2+), Ca(2+) and Fe(3+). Functionally, bifunctional beta-xylosidase/alpha-L-arabinosidases with a low level of xylanase activity. Is most active on 4-nitrophenyl beta-D-xylopyranoside (pNPX) (defined as 100%), moderate on p-nitrophenyl-alpha-L-arabinofuranoside (pNPA) (56.6%), and weak on beechwood xylan (5.7%) and birchwood xylan (2.7%). Is able to attack xylooligosacchardies with degrees of polymerisation of 2-5, releasing the amounts of reducing sugars in the order of xylopentose &gt; xylotetraose &gt; xylotriose &gt; xylobiose, i.e. the rate of xylose released from xylooligosacchardies increased with the chain length. No activity was detected in the presence of carboxymethyl cellulose-sodium (CMC-Na), sugar beet arabinan, AZCL-arabinan (debranched), 4-nitrophenyl a-D - galactopyranoside, 2-nitrophenyl beta-D-galactopyranoside, and 4-nitrophenyl alpha-D-glucopyranoside. This is Xylosidase/arabinosidase 43B from Humicola insolens (Soft-rot fungus).